Consider the following 79-residue polypeptide: Acyl carrier protein (79 aa).

Residues 3 to 78 (QEILEKVCSI…DAVKFIEEKK (76 aa)) enclose the Carrier domain. Residue S38 is modified to O-(pantetheine 4'-phosphoryl)serine.

Belongs to the acyl carrier protein (ACP) family. In terms of processing, 4'-phosphopantetheine is transferred from CoA to a specific serine of apo-ACP by AcpS. This modification is essential for activity because fatty acids are bound in thioester linkage to the sulfhydryl of the prosthetic group.

It is found in the cytoplasm. It functions in the pathway lipid metabolism; fatty acid biosynthesis. Carrier of the growing fatty acid chain in fatty acid biosynthesis. The polypeptide is Acyl carrier protein (Prochlorococcus marinus (strain MIT 9301)).